The primary structure comprises 512 residues: CaM kinase-like vesicle-associated protein (512 aa).

The 263-residue stretch at 24 to 286 (YDLGQVIKTE…AEEAISHEWI (263 aa)) folds into the Protein kinase domain. Residues 328-347 (APEQSGTAATQSASDAATPG) form a disordered region. Over residues 332-347 (SGTAATQSASDAATPG) the composition is skewed to low complexity. Ser392 carries the phosphoserine modification. The interval 393 to 512 (ADRSATPATD…AQESQRVETS (120 aa)) is disordered. The segment covering 398 to 439 (TPATDGSATPATDGSVTPATDGSITPATDGSVTPATDRSATP) has biased composition (polar residues). Thr446 carries the post-translational modification Phosphothreonine. A compositionally biased stretch (polar residues) spans 449-460 (TEESTVPATQSS). Low complexity predominate over residues 461 to 478 (ALPAAKAAATPEPAVAQP). The residue at position 470 (Thr470) is a Phosphothreonine.

It belongs to the protein kinase superfamily. CAMK Ser/Thr protein kinase family. In terms of assembly, interacts with calmodulin, in the presence of calcium. It depends on Ca(2+) as a cofactor.

It is found in the cell membrane. The protein localises to the cytoplasmic vesicle membrane. Does not appear to have detectable kinase activity. The sequence is that of CaM kinase-like vesicle-associated protein (Camkv) from Mus musculus (Mouse).